The primary structure comprises 428 residues: Enolase (428 aa).

Residue Gln165 participates in (2R)-2-phosphoglycerate binding. Residue Glu207 is the Proton donor of the active site. Mg(2+) is bound by residues Asp244, Glu285, and Asp312. Residues Lys337, Arg366, Ser367, and Lys388 each contribute to the (2R)-2-phosphoglycerate site. Lys337 acts as the Proton acceptor in catalysis.

Belongs to the enolase family. As to quaternary structure, component of the RNA degradosome, a multiprotein complex involved in RNA processing and mRNA degradation. Requires Mg(2+) as cofactor.

The protein localises to the cytoplasm. The protein resides in the secreted. It is found in the cell surface. The enzyme catalyses (2R)-2-phosphoglycerate = phosphoenolpyruvate + H2O. Its pathway is carbohydrate degradation; glycolysis; pyruvate from D-glyceraldehyde 3-phosphate: step 4/5. Its function is as follows. Catalyzes the reversible conversion of 2-phosphoglycerate (2-PG) into phosphoenolpyruvate (PEP). It is essential for the degradation of carbohydrates via glycolysis. The chain is Enolase from Coxiella burnetii (strain CbuK_Q154) (Coxiella burnetii (strain Q154)).